Reading from the N-terminus, the 464-residue chain is Spore coat protein SP65 (464 aa).

An N-terminal signal peptide occupies residues 1–17 (MKVLLLLVCLVFAYVNA). In terms of domain architecture, Follistatin-like 1 spans 21 to 43 (ACYNVVCPSNYQCRAEGDQAYCV). Residue N111 is glycosylated (N-linked (GlcNAc...) asparagine). Follistatin-like domains are found at residues 121–143 (VCRD…PHCV) and 151–173 (LCRV…PTCL). N247 carries an N-linked (GlcNAc...) asparagine glycan. The disordered stretch occupies residues 250–320 (STTGATTGAT…STTGAATTAP (71 aa)).

As to quaternary structure, binds to the C-terminal region of pspB.

The protein resides in the spore wall. Functionally, forms a triad with cellulose and pspB that is essential for spore outer layer formation. The polypeptide is Spore coat protein SP65 (cotE) (Dictyostelium discoideum (Social amoeba)).